The primary structure comprises 190 residues: Peptidyl-tRNA hydrolase (190 aa).

Phenylalanine 14 lines the tRNA pocket. The active-site Proton acceptor is the histidine 19. Positions 64, 66, and 112 each coordinate tRNA.

Belongs to the PTH family. As to quaternary structure, monomer.

Its subcellular location is the cytoplasm. It catalyses the reaction an N-acyl-L-alpha-aminoacyl-tRNA + H2O = an N-acyl-L-amino acid + a tRNA + H(+). Hydrolyzes ribosome-free peptidyl-tRNAs (with 1 or more amino acids incorporated), which drop off the ribosome during protein synthesis, or as a result of ribosome stalling. Its function is as follows. Catalyzes the release of premature peptidyl moieties from peptidyl-tRNA molecules trapped in stalled 50S ribosomal subunits, and thus maintains levels of free tRNAs and 50S ribosomes. The sequence is that of Peptidyl-tRNA hydrolase from Staphylococcus epidermidis (strain ATCC 35984 / DSM 28319 / BCRC 17069 / CCUG 31568 / BM 3577 / RP62A).